The sequence spans 289 residues: Cyclin-dependent kinase inhibitor 4 (289 aa).

3 disordered regions span residues 1-31 (MGKY…ESSI), 56-160 (LQQQ…VSES), and 227-248 (SESN…TTPE). Residues 13–28 (AGAGAGGGGGGGGGGE) show a composition bias toward gly residues. The span at 56–80 (LQQQQQRCLLQKPSSPSSLPPTSAS) shows a compositional bias: low complexity. Positions 134-144 (CGRNPNPRSNL) are enriched in polar residues.

Belongs to the CDI family. ICK/KRP subfamily. In terms of assembly, specifically interacts with CDKA-1, but not with CDKB1-1. Interacts with CYCD4-1. Binds to FBL17. In terms of tissue distribution, expressed in leaves and flowers and at lower levels in roots.

It is found in the nucleus. The protein localises to the nucleoplasm. Functionally, binds and inhibits CYCD2-1/CDKA-1 complex kinase activity. May target specifically CDKA-1. This chain is Cyclin-dependent kinase inhibitor 4 (KRP4), found in Arabidopsis thaliana (Mouse-ear cress).